The following is a 317-amino-acid chain: Urease accessory protein 6 (317 aa).

It belongs to the UreF family. URE4, URE6 and URE7 may form a complex that acts as a GTP-hydrolysis-dependent molecular chaperone, activating the urease apoprotein URE1.

Its function is as follows. Urease accessory protein required for the maturation and activation of urease via the functional incorporation of the urease nickel metallocenter. Plays a role in host brain invasion. The chain is Urease accessory protein 6 from Cryptococcus neoformans var. grubii serotype A (strain H99 / ATCC 208821 / CBS 10515 / FGSC 9487) (Filobasidiella neoformans var. grubii).